Consider the following 942-residue polypeptide: Leucine--tRNA ligase (942 aa).

The 'HIGH' region motif lies at 41–51 (PYLNGVLHAGH). A 'KMSKS' region motif is present at residues 633 to 637 (KLSKS). Lysine 636 lines the ATP pocket.

The protein belongs to the class-I aminoacyl-tRNA synthetase family.

It localises to the cytoplasm. It carries out the reaction tRNA(Leu) + L-leucine + ATP = L-leucyl-tRNA(Leu) + AMP + diphosphate. The protein is Leucine--tRNA ligase of Methanocaldococcus jannaschii (strain ATCC 43067 / DSM 2661 / JAL-1 / JCM 10045 / NBRC 100440) (Methanococcus jannaschii).